We begin with the raw amino-acid sequence, 393 residues long: Formate-dependent phosphoribosylglycinamide formyltransferase (393 aa).

N(1)-(5-phospho-beta-D-ribosyl)glycinamide-binding positions include 22 to 23 (EL) and Glu82. Residues Arg114, Lys155, 160–165 (SSGKGQ), 195–198 (EGFV), and Glu203 contribute to the ATP site. Positions 119–308 (RLAAEELGLV…EFALHVRAIL (190 aa)) constitute an ATP-grasp domain. Positions 267 and 279 each coordinate Mg(2+). N(1)-(5-phospho-beta-D-ribosyl)glycinamide contacts are provided by residues Asp286, Lys356, and 363-364 (RR).

Belongs to the PurK/PurT family. In terms of assembly, homodimer.

It carries out the reaction N(1)-(5-phospho-beta-D-ribosyl)glycinamide + formate + ATP = N(2)-formyl-N(1)-(5-phospho-beta-D-ribosyl)glycinamide + ADP + phosphate + H(+). It participates in purine metabolism; IMP biosynthesis via de novo pathway; N(2)-formyl-N(1)-(5-phospho-D-ribosyl)glycinamide from N(1)-(5-phospho-D-ribosyl)glycinamide (formate route): step 1/1. Functionally, involved in the de novo purine biosynthesis. Catalyzes the transfer of formate to 5-phospho-ribosyl-glycinamide (GAR), producing 5-phospho-ribosyl-N-formylglycinamide (FGAR). Formate is provided by PurU via hydrolysis of 10-formyl-tetrahydrofolate. In Solidesulfovibrio magneticus (strain ATCC 700980 / DSM 13731 / RS-1) (Desulfovibrio magneticus), this protein is Formate-dependent phosphoribosylglycinamide formyltransferase.